Reading from the N-terminus, the 120-residue chain is Large ribosomal subunit protein bL17 (120 aa).

This sequence belongs to the bacterial ribosomal protein bL17 family. In terms of assembly, part of the 50S ribosomal subunit. Contacts protein L32.

The chain is Large ribosomal subunit protein bL17 from Bacillus licheniformis (strain ATCC 14580 / DSM 13 / JCM 2505 / CCUG 7422 / NBRC 12200 / NCIMB 9375 / NCTC 10341 / NRRL NRS-1264 / Gibson 46).